A 248-amino-acid chain; its full sequence is Triosephosphate isomerase (248 aa).

9–11 contacts substrate; the sequence is NWK. The Electrophile role is filled by H92. E164 serves as the catalytic Proton acceptor. Residues G170, S209, and 230-231 each bind substrate; that span reads GG.

Belongs to the triosephosphate isomerase family. Homodimer.

Its subcellular location is the cytoplasm. It carries out the reaction D-glyceraldehyde 3-phosphate = dihydroxyacetone phosphate. It functions in the pathway carbohydrate biosynthesis; gluconeogenesis. Its pathway is carbohydrate degradation; glycolysis; D-glyceraldehyde 3-phosphate from glycerone phosphate: step 1/1. Involved in the gluconeogenesis. Catalyzes stereospecifically the conversion of dihydroxyacetone phosphate (DHAP) to D-glyceraldehyde-3-phosphate (G3P). This chain is Triosephosphate isomerase, found in Thiobacillus denitrificans (strain ATCC 25259 / T1).